The sequence spans 113 residues: T cell receptor alpha variable 8-1 (113 aa).

Positions 1–20 (MLLLLIPVLGMIFALRDARA) are cleaved as a signal peptide. An Ig-like domain is found at 21–113 (QSVSQHNHHV…DTAEYFCAVN (93 aa)). Cysteines 42 and 110 form a disulfide. N-linked (GlcNAc...) asparagine glycosylation is present at Asn-43.

In terms of assembly, alpha-beta TR is a heterodimer composed of an alpha and beta chain; disulfide-linked. The alpha-beta TR is associated with the transmembrane signaling CD3 coreceptor proteins to form the TR-CD3 (TcR or TCR). The assembly of alpha-beta TR heterodimers with CD3 occurs in the endoplasmic reticulum where a single alpha-beta TR heterodimer associates with one CD3D-CD3E heterodimer, one CD3G-CD3E heterodimer and one CD247 homodimer forming a stable octameric structure. CD3D-CD3E and CD3G-CD3E heterodimers preferentially associate with TR alpha and TR beta chains, respectively. The association of the CD247 homodimer is the last step of TcR assembly in the endoplasmic reticulum and is required for transport to the cell surface.

It localises to the cell membrane. In terms of biological role, v region of the variable domain of T cell receptor (TR) alpha chain that participates in the antigen recognition. Alpha-beta T cell receptors are antigen specific receptors which are essential to the immune response and are present on the cell surface of T lymphocytes. Recognize peptide-major histocompatibility (MH) (pMH) complexes that are displayed by antigen presenting cells (APC), a prerequisite for efficient T cell adaptive immunity against pathogens. Binding of alpha-beta TR to pMH complex initiates TR-CD3 clustering on the cell surface and intracellular activation of LCK that phosphorylates the ITAM motifs of CD3G, CD3D, CD3E and CD247 enabling the recruitment of ZAP70. In turn ZAP70 phosphorylates LAT, which recruits numerous signaling molecules to form the LAT signalosome. The LAT signalosome propagates signal branching to three major signaling pathways, the calcium, the mitogen-activated protein kinase (MAPK) kinase and the nuclear factor NF-kappa-B (NF-kB) pathways, leading to the mobilization of transcription factors that are critical for gene expression and essential for T cell growth and differentiation. The T cell repertoire is generated in the thymus, by V-(D)-J rearrangement. This repertoire is then shaped by intrathymic selection events to generate a peripheral T cell pool of self-MH restricted, non-autoaggressive T cells. Post-thymic interaction of alpha-beta TR with the pMH complexes shapes TR structural and functional avidity. The sequence is that of T cell receptor alpha variable 8-1 from Homo sapiens (Human).